Consider the following 236-residue polypeptide: MTGYEAWLITFGTWMYSVNKEQLARAGFYAIGQEDKIQCFHCGGGLANWKPKEDPWEQHAKWYPGCKYLLEEKGHEYINNIHLTRSLEGALVQTTKKTPSLTKRISDTIFPNPMLQEAIRMGFDFKDIKKIMEEKIQTSGSNYKTLEVLVADLVSAQKDTTENESNQTSLQREISPEEPLRRLQEEKLCKICMDRHIAVVFIPCGHLVTCKQCAEAVDRCPMCNAVIDFKQRVFMS.

A BIR repeat occupies W7 to L70. 4 residues coordinate Zn(2+): C39, C42, H59, and C66. The RING-type zinc finger occupies C189–N224.

This sequence belongs to the IAP family. As to quaternary structure, binds to caspase-9.

It localises to the cytoplasm. Functionally, protects against apoptosis mediated by BAX. The polypeptide is Baculoviral IAP repeat-containing protein 8 (BIRC8) (Gorilla gorilla gorilla (Western lowland gorilla)).